Consider the following 272-residue polypeptide: MTGSIWAGSIWAIVPAAGRGTRFGGPLPKQYLQAGGQPLMAYTLMALAAHPALAGIVVAIAPDDADWPGWTAVQSKPVLTCLGGATRAASVLAGVLALPESVRADDFVLVHDAARPNLALADLDRLLEIGRGDPVGAILAAPVRDTLKRAGDDGGIDGTEPRERLWRALTPQLFRRHQLIRGLTEASAAGVDVTDEAMAMERMGLRPLLVEGAEDNFKVTTPADLARFEFELARRGIAVDADALEAPAVNAQSNARNVATQLATVSHGNDAT.

This sequence belongs to the IspD/TarI cytidylyltransferase family. IspD subfamily.

It carries out the reaction 2-C-methyl-D-erythritol 4-phosphate + CTP + H(+) = 4-CDP-2-C-methyl-D-erythritol + diphosphate. Its pathway is isoprenoid biosynthesis; isopentenyl diphosphate biosynthesis via DXP pathway; isopentenyl diphosphate from 1-deoxy-D-xylulose 5-phosphate: step 2/6. Functionally, catalyzes the formation of 4-diphosphocytidyl-2-C-methyl-D-erythritol from CTP and 2-C-methyl-D-erythritol 4-phosphate (MEP). This chain is 2-C-methyl-D-erythritol 4-phosphate cytidylyltransferase, found in Xanthomonas oryzae pv. oryzae (strain MAFF 311018).